The chain runs to 344 residues: N-acetyl-gamma-glutamyl-phosphate reductase (344 aa).

C150 is a catalytic residue.

It belongs to the NAGSA dehydrogenase family. Type 1 subfamily.

Its subcellular location is the cytoplasm. The catalysed reaction is N-acetyl-L-glutamate 5-semialdehyde + phosphate + NADP(+) = N-acetyl-L-glutamyl 5-phosphate + NADPH + H(+). It functions in the pathway amino-acid biosynthesis; L-arginine biosynthesis; N(2)-acetyl-L-ornithine from L-glutamate: step 3/4. In terms of biological role, catalyzes the NADPH-dependent reduction of N-acetyl-5-glutamyl phosphate to yield N-acetyl-L-glutamate 5-semialdehyde. In Pseudomonas putida (strain ATCC 700007 / DSM 6899 / JCM 31910 / BCRC 17059 / LMG 24140 / F1), this protein is N-acetyl-gamma-glutamyl-phosphate reductase.